The sequence spans 186 residues: ADP-ribosylation factor-like protein 6 (186 aa).

Gly2 carries the N-myristoyl glycine lipid modification. Residues 24 to 31 (GLDNSGKT), 69 to 73 (DMSGQ), and 130 to 133 (NKMD) contribute to the GTP site.

It belongs to the small GTPase superfamily. Arf family. Interacts with SEC61B, ARL6IP1, ARL6IP2, ARL6IP3, ARL6IP4 ARL6IP5 and ARL6IP6. Interacts (GTP-bound form) with the BBSome a complex that contains BBS1, BBS2, BBS4, BBS5, BBS7, BBS8/TTC8, BBS9 and BBIP10. Interacts (GTP-free form) with IFT27.

It localises to the cell projection. The protein resides in the cilium membrane. It is found in the cytoplasm. The protein localises to the cytoskeleton. Its subcellular location is the cilium axoneme. It localises to the cilium basal body. In terms of biological role, involved in membrane protein trafficking at the base of the ciliary organelle. Mediates recruitment onto plasma membrane of the BBSome complex which would constitute a coat complex required for sorting of specific membrane proteins to the primary cilia. Together with the BBSome complex and LTZL1, controls SMO ciliary trafficking and contributes to the sonic hedgehog (SHH) pathway regulation. May regulate cilia assembly and disassembly and subsequent ciliary signaling events such as the Wnt signaling cascade. Isoform 2 may be required for proper retinal function and organization. This is ADP-ribosylation factor-like protein 6 (ARL6) from Bos taurus (Bovine).